A 259-amino-acid polypeptide reads, in one-letter code: 1,2-dihydroxy-1,2-dihydronaphthalene dehydrogenase (259 aa).

8–32 (SITGAGSGIGLELVRSFKSAGYYVS) contributes to the NAD(+) binding site. Position 140 (S140) interacts with substrate. The active-site Proton acceptor is the Y153.

This sequence belongs to the short-chain dehydrogenases/reductases (SDR) family.

The enzyme catalyses (1R,2S)-1,2-dihydronaphthalene-1,2-diol + NAD(+) = naphthalene-1,2-diol + NADH + H(+). It carries out the reaction cis-1,2-dihydroxy-1,2-dihydrodibenzothiophene + NAD(+) = 1,2-dihydroxydibenzothiophene + NADH + H(+). It participates in aromatic compound metabolism; naphthalene degradation. Its function is as follows. Catalyzes the oxidation of naphthalene dihydrodiol into 1,2-dihydroxynaphthalene. The sequence is that of 1,2-dihydroxy-1,2-dihydronaphthalene dehydrogenase (nahB) from Pseudomonas putida (Arthrobacter siderocapsulatus).